Consider the following 255-residue polypeptide: 5-oxoprolinase subunit A (255 aa).

It belongs to the LamB/PxpA family. Forms a complex composed of PxpA, PxpB and PxpC.

The catalysed reaction is 5-oxo-L-proline + ATP + 2 H2O = L-glutamate + ADP + phosphate + H(+). In terms of biological role, catalyzes the cleavage of 5-oxoproline to form L-glutamate coupled to the hydrolysis of ATP to ADP and inorganic phosphate. In Thermococcus onnurineus (strain NA1), this protein is 5-oxoprolinase subunit A.